The primary structure comprises 127 residues: Glycine cleavage system H protein (127 aa).

In terms of domain architecture, Lipoyl-binding spans 22–104 (AVVIGITHFA…YEGAWMVKVE (83 aa)). Lys63 carries the N6-lipoyllysine modification.

The protein belongs to the GcvH family. The glycine cleavage system is composed of four proteins: P, T, L and H. Requires (R)-lipoate as cofactor.

Functionally, the glycine cleavage system catalyzes the degradation of glycine. The H protein shuttles the methylamine group of glycine from the P protein to the T protein. Is also involved in protein lipoylation via its role as an octanoyl/lipoyl carrier protein intermediate. The polypeptide is Glycine cleavage system H protein (Bacillus mycoides (strain KBAB4) (Bacillus weihenstephanensis)).